Consider the following 691-residue polypeptide: Elongation factor G (691 aa).

In terms of domain architecture, tr-type G spans Glu8 to Ile282. Residues Ala17–Thr24, Asp81–His85, and Asn135–Asp138 each bind GTP.

Belongs to the TRAFAC class translation factor GTPase superfamily. Classic translation factor GTPase family. EF-G/EF-2 subfamily.

It localises to the cytoplasm. In terms of biological role, catalyzes the GTP-dependent ribosomal translocation step during translation elongation. During this step, the ribosome changes from the pre-translocational (PRE) to the post-translocational (POST) state as the newly formed A-site-bound peptidyl-tRNA and P-site-bound deacylated tRNA move to the P and E sites, respectively. Catalyzes the coordinated movement of the two tRNA molecules, the mRNA and conformational changes in the ribosome. The sequence is that of Elongation factor G from Synechococcus sp. (strain WH7803).